Reading from the N-terminus, the 322-residue chain is Atrochrysone carboxyl ACP thioesterase dmxR1 (322 aa).

Zn(2+) contacts are provided by histidine 105, histidine 107, aspartate 109, and histidine 110. The active-site Proton donor/acceptor is the aspartate 109.

This sequence belongs to the metallo-beta-lactamase superfamily. Zn(2+) is required as a cofactor.

The enzyme catalyses atrochrysone carboxyl-[ACP] + H2O = atrochrysone carboxylate + holo-[ACP] + H(+). The protein operates within secondary metabolite biosynthesis. Functionally, atrochrysone carboxyl ACP thioesterase; part of the gene cluster that mediates the biosynthesis of the dimeric xanthones cryptosporioptides. The pathway begins with the synthesis of atrochrysone thioester by the polyketide synthase dmx-nrPKS. The atrochrysone carboxyl ACP thioesterase dmxR1 then breaks the thioester bond and releases the atrochrysone carboxylic acid from dmx-nrPKS. Atrochrysone carboxylic acid is decarboxylated by the decarboxylase dmxR15, and oxidized by the anthrone oxygenase dmxR16 to yield emodin. Emodin is then reduced to emodin hydroquinone by the oxidoreductase dmxR7. A-ring reduction by the short chain dehydrogenase dmxR18, dehydration by the scytalone dehydratase-like protein dmxR17 and probable spontaneous re-oxidation, results in overall deoxygenation to chrysophanol. Baeyer-Villiger oxidation by the Baeyer-Villiger monooxygenase (BVMO) dmxR6 then yields monodictylactone in equilibrium with monodictyphenone. In the case of the cryptosporioptides biosynthesis, monodictylactone is reduced at C-12 to an alcohol (by the short chain dehydrogenases dmxR12 or dmxR8) and hydroxylated at C-5 by dmxR9, yielding the electron-rich aromatic which could eliminate H(2)O to form the ortho-quinonemethide, followed by tautomerisation to paraquinone and complete the formal reduction to produce the 10-methylgroup. Conjugate addition of C-4a-OH to the resulting paraquinone by the monooxygenase dmxR10 then gives cyclohexadienone, which is then reduced at C-5 by the short chain dehydrogenase dmxR3 to give the dihydroxanthone. The 6,7-epoxide in the cryptosporioptides could be introduced by the cytochrome P450 monooxygenase dmxL3. The highly reducing PKS dmxL2 manufactures butyrate, which is further carboxylated by dmxL1 to form ethylmalonate. It is not yet clear whether the carboxylation occurs while the butyrate is attached to the ACP of dmxL2, but this unusual fungal metabolite could then be esterified to O-5 by the O-acetyltransferase dmxR13. Finally, dimerization performed by dmxR5 gives the observed dimers cryptosporioptides A, B and C as the final products of the pathway. The chain is Atrochrysone carboxyl ACP thioesterase dmxR1 from Cryptosporiopsis sp. (strain 8999).